We begin with the raw amino-acid sequence, 295 residues long: Dehydrodolichyl diphosphate synthase 6 (295 aa).

This sequence belongs to the UPP synthase family. The cofactor is Mg(2+).

It participates in protein modification; protein glycosylation. Its function is as follows. Catalyzes cis-prenyl chain elongation to produce the polyprenyl backbone of dolichol, a glycosyl carrier-lipid required for the biosynthesis of several classes of glycoprotein. The sequence is that of Dehydrodolichyl diphosphate synthase 6 from Arabidopsis thaliana (Mouse-ear cress).